The chain runs to 545 residues: CTP synthase (545 aa).

The amidoligase domain stretch occupies residues 1-266 (MTTNYIFVTG…DDYICKRFSL (266 aa)). S14 serves as a coordination point for CTP. S14 is a UTP binding site. Residues 15–20 (SLGKGI) and D72 each bind ATP. Mg(2+) contacts are provided by D72 and E140. Residues 147 to 149 (DIE), 187 to 192 (KTKPTQ), and K223 contribute to the CTP site. UTP contacts are provided by residues 187 to 192 (KTKPTQ) and K223. Position 239 to 241 (239 to 241 (KDV)) interacts with ATP. The 252-residue stretch at 291–542 (TIGMVGKYIE…VKAASEHQKR (252 aa)) folds into the Glutamine amidotransferase type-1 domain. G352 provides a ligand contact to L-glutamine. The Nucleophile; for glutamine hydrolysis role is filled by C379. L-glutamine contacts are provided by residues 380 to 383 (LGMQ), E403, and R470. Catalysis depends on residues H515 and E517.

This sequence belongs to the CTP synthase family. As to quaternary structure, homotetramer.

It catalyses the reaction UTP + L-glutamine + ATP + H2O = CTP + L-glutamate + ADP + phosphate + 2 H(+). It carries out the reaction L-glutamine + H2O = L-glutamate + NH4(+). The catalysed reaction is UTP + NH4(+) + ATP = CTP + ADP + phosphate + 2 H(+). The protein operates within pyrimidine metabolism; CTP biosynthesis via de novo pathway; CTP from UDP: step 2/2. With respect to regulation, allosterically activated by GTP, when glutamine is the substrate; GTP has no effect on the reaction when ammonia is the substrate. The allosteric effector GTP functions by stabilizing the protein conformation that binds the tetrahedral intermediate(s) formed during glutamine hydrolysis. Inhibited by the product CTP, via allosteric rather than competitive inhibition. Functionally, catalyzes the ATP-dependent amination of UTP to CTP with either L-glutamine or ammonia as the source of nitrogen. Regulates intracellular CTP levels through interactions with the four ribonucleotide triphosphates. The polypeptide is CTP synthase (Salmonella schwarzengrund (strain CVM19633)).